Consider the following 227-residue polypeptide: UPF0688 protein C1orf174 homolog (227 aa).

Disordered stretches follow at residues 1–122 and 207–227; these read MRKR…VSDL and AKEEDEDDDDYVDGLANEGNI. Positions 47–63 are enriched in basic and acidic residues; sequence TEKESSKKLRKDEKGPV. Polar residues-rich tracts occupy residues 77-104 and 113-122; these read AASNESSNVNDSQQSEKSITNTKDNGTR and RLPSSPVSDL.

It belongs to the UPF0688 family.

It localises to the nucleus. The polypeptide is UPF0688 protein C1orf174 homolog (Xenopus tropicalis (Western clawed frog)).